A 731-amino-acid chain; its full sequence is NADH-ubiquinone oxidoreductase 75 kDa subunit, mitochondrial (731 aa).

The transit peptide at 1-27 (MIRAPLVKALGALGSPTHQMASRAVRT) directs the protein to the mitochondrion. One can recognise a 2Fe-2S ferredoxin-type domain in the interval 40 to 118 (EKIEVFVDDI…GWRIKTNSDL (79 aa)). 4 residues coordinate [2Fe-2S] cluster: Cys-74, Cys-85, Cys-88, and Cys-102. Residues 118 to 157 (LTRKAREGVMEFLLMNHPLDCPICDQGGECDLQDQAMAFG) enclose the 4Fe-4S His(Cys)3-ligated-type domain. [4Fe-4S] cluster-binding residues include His-134, Cys-138, Cys-141, Cys-147, Cys-190, Cys-193, Cys-196, and Cys-240. One can recognise a 4Fe-4S Mo/W bis-MGD-type domain in the interval 259–315 (IRKVSSIDVLDAVGSNIVVSTRTNEVLRILPRENEDVNEEWLADKSRFACDGLKRQR).

It belongs to the complex I 75 kDa subunit family. In terms of assembly, complex I is composed of about 45 different subunits. It depends on [2Fe-2S] cluster as a cofactor. [4Fe-4S] cluster serves as cofactor.

The protein localises to the mitochondrion inner membrane. The catalysed reaction is a ubiquinone + NADH + 5 H(+)(in) = a ubiquinol + NAD(+) + 4 H(+)(out). In terms of biological role, core subunit of the mitochondrial membrane respiratory chain NADH dehydrogenase (Complex I) that is believed to belong to the minimal assembly required for catalysis. Complex I functions in the transfer of electrons from NADH to the respiratory chain. The immediate electron acceptor for the enzyme is believed to be ubiquinone. This is the largest subunit of complex I and it is a component of the iron-sulfur (IP) fragment of the enzyme. It may form part of the active site crevice where NADH is oxidized. The protein is NADH-ubiquinone oxidoreductase 75 kDa subunit, mitochondrial of Drosophila melanogaster (Fruit fly).